Consider the following 245-residue polypeptide: 6-carboxyhexanoate--CoA ligase (245 aa).

The protein belongs to the BioW family. As to quaternary structure, homodimer. It depends on Mg(2+) as a cofactor.

It catalyses the reaction heptanedioate + ATP + CoA = 6-carboxyhexanoyl-CoA + AMP + diphosphate. Its pathway is metabolic intermediate metabolism; pimeloyl-CoA biosynthesis; pimeloyl-CoA from pimelate: step 1/1. Its function is as follows. Catalyzes the transformation of pimelate into pimeloyl-CoA with concomitant hydrolysis of ATP to AMP. The sequence is that of 6-carboxyhexanoate--CoA ligase from Methanococcus vannielii (strain ATCC 35089 / DSM 1224 / JCM 13029 / OCM 148 / SB).